The primary structure comprises 306 residues: Oxygen-dependent coproporphyrinogen-III oxidase (306 aa).

Residue Ser-94 coordinates substrate. His-98 and His-108 together coordinate a divalent metal cation. Catalysis depends on His-108, which acts as the Proton donor. Residue 110 to 112 (NVR) participates in substrate binding. A divalent metal cation is bound by residues His-147 and His-177. The interval 242 to 277 (YVEFNLVYDRGTLFGLQTGGRTESILMSMPPLVRWQ) is important for dimerization. Substrate is bound at residue 260 to 262 (GGR).

This sequence belongs to the aerobic coproporphyrinogen-III oxidase family. In terms of assembly, homodimer. The cofactor is a divalent metal cation.

It is found in the cytoplasm. The catalysed reaction is coproporphyrinogen III + O2 + 2 H(+) = protoporphyrinogen IX + 2 CO2 + 2 H2O. The protein operates within porphyrin-containing compound metabolism; protoporphyrin-IX biosynthesis; protoporphyrinogen-IX from coproporphyrinogen-III (O2 route): step 1/1. Functionally, involved in the heme biosynthesis. Catalyzes the aerobic oxidative decarboxylation of propionate groups of rings A and B of coproporphyrinogen-III to yield the vinyl groups in protoporphyrinogen-IX. This chain is Oxygen-dependent coproporphyrinogen-III oxidase, found in Shewanella sediminis (strain HAW-EB3).